Consider the following 644-residue polypeptide: Exoribonuclease 2 (644 aa).

The RNB domain maps to 189 to 516 (REDLTALNFV…NHRLLKAIIT (328 aa)). The 83-residue stretch at 561–643 (DTRFPAEIID…ETRNVVARPV (83 aa)) folds into the S1 motif domain.

This sequence belongs to the RNR ribonuclease family. RNase II subfamily.

It is found in the cytoplasm. The enzyme catalyses Exonucleolytic cleavage in the 3'- to 5'-direction to yield nucleoside 5'-phosphates.. Involved in mRNA degradation. Hydrolyzes single-stranded polyribonucleotides processively in the 3' to 5' direction. This chain is Exoribonuclease 2, found in Yersinia enterocolitica serotype O:8 / biotype 1B (strain NCTC 13174 / 8081).